Here is a 262-residue protein sequence, read N- to C-terminus: MKTPFGKTPGQRSRADAGHAGVSANMMKKRTSHKKHRSSVGPSKPVSQPRRNIVGCRIQHGWKEGNGPVTQWKGTVLDQVPVNPSLYLIKYDGFDCVYGLELNKDERVSALEVLPDRVATSRISDAHLADTMIGKAVEHMFETEDGSKDEWRGMVLARAPVMNTWFYITYEKDPVLYMYQLLDDYKEGDLRIMPDSNDSPPAEREPGEVVDSLVGKQVEYAKEDGSKRTGMVIHQVEAKPSVYFIKFDDDFHIYVYDLVKTS.

The tract at residues 1–51 (MKTPFGKTPGQRSRADAGHAGVSANMMKKRTSHKKHRSSVGPSKPVSQPRR) is disordered. Residues lysine 7 and lysine 28 each participate in a glycyl lysine isopeptide (Lys-Gly) (interchain with G-Cter in SUMO2) cross-link. Residues 27–38 (MKKRTSHKKHRS) are compositionally biased toward basic residues. Residue lysine 44 is modified to N6-acetyllysine; alternate. Residue lysine 44 forms a Glycyl lysine isopeptide (Lys-Gly) (interchain with G-Cter in SUMO2); alternate linkage. The interval 53–116 (IVGCRIQHGW…RVSALEVLPD (64 aa)) is tudor-like domain 1. The interval 93–98 (GFDCVY) is histone H3K4me3 and H3R8me2a binding. Serine 109 and serine 124 each carry phosphoserine; by AURKA. The tract at residues 132 to 193 (MIGKAVEHMF…DYKEGDLRIM (62 aa)) is tudor-like domain 2. A region of interest (histone H3K4me3 and H3R8me2a binding) is located at residue glutamate 142. Serine 199 is subject to Phosphoserine. The interval 213-262 (LVGKQVEYAKEDGSKRTGMVIHQVEAKPSVYFIKFDDDFHIYVYDLVKTS) is tudor-like domain 3. The interval 250 to 252 (DFH) is histone H3K4me3 and H3R8me2a binding.

This sequence belongs to the SPIN/STSY family. As to quaternary structure, homodimer; may form higher-order oligomers. Interacts with TCF7L2/TCF4; the interaction is direct. Interacts with HABP4 and SERBP1. Interacts with SPINDOC; SPINDOC stabilizes SPIN1 and enhances its association with bivalent H3K4me3K9me3 mark. Interacts with SPOCD1; promoting recruitment of PIWIL4 and SPOCD1 to transposons. Post-translationally, phosphorylated during oocyte meiotic maturation. As to expression, highly expressed in ovarian cancer tissues.

The protein localises to the nucleus. The protein resides in the nucleolus. Chromatin reader that specifically recognizes and binds histone H3 both trimethylated at 'Lys-4' and 'Lys-9' (H3K4me3K9me3) and is involved in piRNA-mediated retrotransposon silencing during spermatogenesis. Plays a key role in the initiation of the PIWIL4-piRNA pathway, a pathway that directs transposon DNA methylation and silencing in the male embryonic germ cells, by promoting recruitment of DNA methylation machinery to transposons: binds young, but not old, LINE1 transposons, which are specifically marked with H3K4me3K9me3, and promotes the recruitment of PIWIL4 and SPOCD1 to transposons, leading to piRNA-directed DNA methylation. Also recognizes and binds histone H3 both trimethylated at 'Lys-4' and asymmetrically dimethylated at 'Arg-8' (H3K4me3 and H3R8me2a) and acts as an activator of Wnt signaling pathway downstream of PRMT2. In case of cancer, promotes cell cancer proliferation via activation of the Wnt signaling pathway. Overexpression induces metaphase arrest and chromosomal instability. Localizes to active rDNA loci and promotes the expression of rRNA genes. May play a role in cell-cycle regulation during the transition from gamete to embryo. Involved in oocyte meiotic resumption, a process that takes place before ovulation to resume meiosis of oocytes blocked in prophase I: may act by regulating maternal transcripts to control meiotic resumption. The chain is Spindlin-1 from Homo sapiens (Human).